Here is a 318-residue protein sequence, read N- to C-terminus: NLP effector protein 9 (318 aa).

The signal sequence occupies residues 1-19 (MRLFAFLWSSVAFLSTVQA). Low complexity predominate over residues 24 to 35 (TASQTQDDSSTP). Disordered stretches follow at residues 24 to 43 (TASQ…PDKY) and 50 to 93 (LRTK…PAPT). The segment covering 55–65 (PMATPNRTIMP) has biased composition (polar residues). An N-linked (GlcNAc...) asparagine glycan is attached at N60. A compositionally biased stretch (pro residues) spans 73 to 93 (PEPPTPEPTYLPTLSPTPAPT). A Conserved undecapeptide motif I motif is present at residues 185–195 (AIMYSWYFPKD). A Hepta-peptide GHRHDWE motif II motif is present at residues 202 to 208 (GHRHDWE).

It belongs to the Necrosis inducing protein (NPP1) family.

Its subcellular location is the secreted. Functionally, secreted effector that contributes to virulence during infection by P.capsici. Induces distinct chlorosis at 3 days after inoculation of host C.annuum leaves, and all the chlorotic areas gradually turn brown and become moderately necrotic at 7 days after inoculation. Caused only small necrotic areas at 7 days after non-host N.benthamiana leaves infection. The sequence is that of NLP effector protein 9 from Phytophthora capsici.